We begin with the raw amino-acid sequence, 348 residues long: Mannonate dehydratase (348 aa).

Belongs to the mannonate dehydratase family. Requires Fe(2+) as cofactor. Mn(2+) serves as cofactor.

The enzyme catalyses D-mannonate = 2-dehydro-3-deoxy-D-gluconate + H2O. The protein operates within carbohydrate metabolism; pentose and glucuronate interconversion. Functionally, catalyzes the dehydration of D-mannonate. The chain is Mannonate dehydratase from Streptococcus uberis (strain ATCC BAA-854 / 0140J).